A 445-amino-acid polypeptide reads, in one-letter code: Argininosuccinate synthase (445 aa).

ATP-binding positions include 17–25 (AFSGGLDTS) and A43. Y99 provides a ligand contact to L-citrulline. ATP-binding residues include G129 and T131. Residues T131, N135, and D136 each coordinate L-aspartate. Residue N135 participates in L-citrulline binding. D136 provides a ligand contact to ATP. Residues R139 and S192 each contribute to the L-citrulline site. Residue D194 participates in ATP binding. T201, E203, and E280 together coordinate L-citrulline.

This sequence belongs to the argininosuccinate synthase family. Type 2 subfamily. As to quaternary structure, homotetramer.

The protein localises to the cytoplasm. The enzyme catalyses L-citrulline + L-aspartate + ATP = 2-(N(omega)-L-arginino)succinate + AMP + diphosphate + H(+). The protein operates within amino-acid biosynthesis; L-arginine biosynthesis; L-arginine from L-ornithine and carbamoyl phosphate: step 2/3. This Ralstonia pickettii (strain 12J) protein is Argininosuccinate synthase.